The primary structure comprises 254 residues: MLAKRIIPCLDVDNGRVVKGKKFLDIQDVADPVELAKRYNDEGADELVFYDITASNEQRGIFLDVVEKVAKEIAIPFMVGGGIRTTKDIHQVLRSGADKVSINSAAVQRPELIFESAQKFGSQCTVLSIDAKEIAVGKWNVFINGGRKDTGIDAIEWAKKGESYGAGEIVVNAMDADGEKNGYNLPLTTAIATAVNIPVIASGGAGNIQHFKDVLSHEIDAALAASVFHYDEIKIPALKTYLNEQEISVRRNSK.

Catalysis depends on residues D11 and D130.

This sequence belongs to the HisA/HisF family. In terms of assembly, heterodimer of HisH and HisF.

The protein localises to the cytoplasm. The catalysed reaction is 5-[(5-phospho-1-deoxy-D-ribulos-1-ylimino)methylamino]-1-(5-phospho-beta-D-ribosyl)imidazole-4-carboxamide + L-glutamine = D-erythro-1-(imidazol-4-yl)glycerol 3-phosphate + 5-amino-1-(5-phospho-beta-D-ribosyl)imidazole-4-carboxamide + L-glutamate + H(+). It participates in amino-acid biosynthesis; L-histidine biosynthesis; L-histidine from 5-phospho-alpha-D-ribose 1-diphosphate: step 5/9. IGPS catalyzes the conversion of PRFAR and glutamine to IGP, AICAR and glutamate. The HisF subunit catalyzes the cyclization activity that produces IGP and AICAR from PRFAR using the ammonia provided by the HisH subunit. The chain is Imidazole glycerol phosphate synthase subunit HisF from Oceanobacillus iheyensis (strain DSM 14371 / CIP 107618 / JCM 11309 / KCTC 3954 / HTE831).